A 49-amino-acid chain; its full sequence is Large ribosomal subunit protein bL32 (49 aa).

A disordered region spans residues 25–49 (AKPVKDKDGTYKLPHHINPTTGEYK).

Belongs to the bacterial ribosomal protein bL32 family.

The chain is Large ribosomal subunit protein bL32 from Sulfurimonas denitrificans (strain ATCC 33889 / DSM 1251) (Thiomicrospira denitrificans (strain ATCC 33889 / DSM 1251)).